Consider the following 451-residue polypeptide: Methylenetetrahydrofolate--tRNA-(uracil-5-)-methyltransferase TrmFO (451 aa).

Residue 10 to 15 coordinates FAD; that stretch reads GGGLAG.

Belongs to the MnmG family. TrmFO subfamily. FAD is required as a cofactor.

It is found in the cytoplasm. The catalysed reaction is uridine(54) in tRNA + (6R)-5,10-methylene-5,6,7,8-tetrahydrofolate + NADH + H(+) = 5-methyluridine(54) in tRNA + (6S)-5,6,7,8-tetrahydrofolate + NAD(+). It catalyses the reaction uridine(54) in tRNA + (6R)-5,10-methylene-5,6,7,8-tetrahydrofolate + NADPH + H(+) = 5-methyluridine(54) in tRNA + (6S)-5,6,7,8-tetrahydrofolate + NADP(+). In terms of biological role, catalyzes the folate-dependent formation of 5-methyl-uridine at position 54 (M-5-U54) in all tRNAs. The protein is Methylenetetrahydrofolate--tRNA-(uracil-5-)-methyltransferase TrmFO of Anaeromyxobacter sp. (strain Fw109-5).